Consider the following 937-residue polypeptide: Translation initiation factor IF-2 (937 aa).

2 disordered regions span residues Lys157–Lys230 and Ile250–Phe346. Residues Glu173 to Lys205 show a composition bias toward basic and acidic residues. Residues Ala252 to Glu265 are compositionally biased toward low complexity. Residues Thr267 to Ser293 show a composition bias toward basic and acidic residues. The span at Lys295–Gln304 shows a compositional bias: polar residues. Positions Pro437–Lys606 constitute a tr-type G domain. The G1 stretch occupies residues Gly446–Thr453. Residue Gly446–Thr453 coordinates GTP. Positions Gly471–His475 are G2. The interval Asp492–Gly495 is G3. GTP-binding positions include Asp492–His496 and Asn546–Asp549. A G4 region spans residues Asn546–Asp549. A G5 region spans residues Ser582–Lys584.

It belongs to the TRAFAC class translation factor GTPase superfamily. Classic translation factor GTPase family. IF-2 subfamily.

It is found in the cytoplasm. Functionally, one of the essential components for the initiation of protein synthesis. Protects formylmethionyl-tRNA from spontaneous hydrolysis and promotes its binding to the 30S ribosomal subunits. Also involved in the hydrolysis of GTP during the formation of the 70S ribosomal complex. The polypeptide is Translation initiation factor IF-2 (Janthinobacterium sp. (strain Marseille) (Minibacterium massiliensis)).